Reading from the N-terminus, the 432-residue chain is Enolase (432 aa).

Glutamine 167 is a (2R)-2-phosphoglycerate binding site. The active-site Proton donor is the glutamate 209. Positions 246, 291, and 318 each coordinate Mg(2+). The (2R)-2-phosphoglycerate site is built by lysine 343, arginine 372, serine 373, and lysine 394. The Proton acceptor role is filled by lysine 343.

It belongs to the enolase family. As to quaternary structure, component of the RNA degradosome, a multiprotein complex involved in RNA processing and mRNA degradation. Requires Mg(2+) as cofactor.

The protein resides in the cytoplasm. It localises to the secreted. The protein localises to the cell surface. The enzyme catalyses (2R)-2-phosphoglycerate = phosphoenolpyruvate + H2O. The protein operates within carbohydrate degradation; glycolysis; pyruvate from D-glyceraldehyde 3-phosphate: step 4/5. Functionally, catalyzes the reversible conversion of 2-phosphoglycerate (2-PG) into phosphoenolpyruvate (PEP). It is essential for the degradation of carbohydrates via glycolysis. This Aliivibrio fischeri (strain ATCC 700601 / ES114) (Vibrio fischeri) protein is Enolase.